The primary structure comprises 154 residues: Prefoldin subunit 5 (154 aa).

The residue at position 2 (alanine 2) is an N-acetylalanine. Lysine 42 carries the post-translational modification N6-acetyllysine. Phosphoserine is present on serine 56.

It belongs to the prefoldin subunit alpha family. As to quaternary structure, heterohexamer of two PFD-alpha type and four PFD-beta type subunits.

The protein resides in the nucleus. Its function is as follows. Binds specifically to cytosolic chaperonin (c-CPN) and transfers target proteins to it. Binds to nascent polypeptide chain and promotes folding in an environment in which there are many competing pathways for nonnative proteins. Represses the transcriptional activity of MYC. This chain is Prefoldin subunit 5 (PFDN5), found in Pongo abelii (Sumatran orangutan).